The chain runs to 228 residues: Eukaryotic translation initiation factor 6 (228 aa).

The protein belongs to the eIF-6 family. Monomer. Associates with the 60S ribosomal subunit.

The protein resides in the cytoplasm. Its subcellular location is the nucleus. The protein localises to the nucleolus. Functionally, binds to the 60S ribosomal subunit and prevents its association with the 40S ribosomal subunit to form the 80S initiation complex in the cytoplasm. May also be involved in ribosome biogenesis. This Guillardia theta (Cryptophyte) protein is Eukaryotic translation initiation factor 6.